The following is a 447-amino-acid chain: N-succinylarginine dihydrolase (447 aa).

Substrate is bound by residues alanine 19–serine 28, asparagine 110, and histidine 137–arginine 138. Glutamate 174 is an active-site residue. Arginine 212 serves as a coordination point for substrate. The active site involves histidine 248. Aspartate 250 and asparagine 359 together coordinate substrate. The active-site Nucleophile is cysteine 365.

This sequence belongs to the succinylarginine dihydrolase family. In terms of assembly, homodimer.

It catalyses the reaction N(2)-succinyl-L-arginine + 2 H2O + 2 H(+) = N(2)-succinyl-L-ornithine + 2 NH4(+) + CO2. It functions in the pathway amino-acid degradation; L-arginine degradation via AST pathway; L-glutamate and succinate from L-arginine: step 2/5. Catalyzes the hydrolysis of N(2)-succinylarginine into N(2)-succinylornithine, ammonia and CO(2). The polypeptide is N-succinylarginine dihydrolase (Escherichia coli O17:K52:H18 (strain UMN026 / ExPEC)).